The chain runs to 380 residues: tRNA-specific 2-thiouridylase MnmA (380 aa).

ATP is bound by residues 9–16 (GVSGGVDS) and Met-35. Residues 94–96 (NPD) form an interaction with target base in tRNA region. Cys-99 serves as the catalytic Nucleophile. Cys-99 and Cys-195 are disulfide-bonded. Gly-123 is an ATP binding site. The segment at 145-147 (KDQ) is interaction with tRNA. Cys-195 functions as the Cysteine persulfide intermediate in the catalytic mechanism. The tract at residues 308 to 309 (RY) is interaction with tRNA.

This sequence belongs to the MnmA/TRMU family.

Its subcellular location is the cytoplasm. It carries out the reaction S-sulfanyl-L-cysteinyl-[protein] + uridine(34) in tRNA + AH2 + ATP = 2-thiouridine(34) in tRNA + L-cysteinyl-[protein] + A + AMP + diphosphate + H(+). In terms of biological role, catalyzes the 2-thiolation of uridine at the wobble position (U34) of tRNA, leading to the formation of s(2)U34. This is tRNA-specific 2-thiouridylase MnmA from Stenotrophomonas maltophilia (strain R551-3).